The following is an 816-amino-acid chain: H(+)/Cl(-) exchange transporter 5 (816 aa).

The Cytoplasmic portion of the chain corresponds to 1 to 124 (MAMWQGAMDN…WALIHSVSDA (124 aa)). Helical transmembrane passes span 125–162 (FSGW…ICTG) and 208–231 (VNYF…VKAF). Positions 237–241 (GSGIP) match the Selectivity filter part_1 motif. Residue S238 coordinates chloride. Residues 240 to 247 (IPEIKTIL) constitute an intramembrane region (helical). The next 2 helical transmembrane spans lie at 256-275 (LGKW…VSSG) and 281-300 (EGPL…HCFN). The Selectivity filter part_2 signature appears at 279 to 283 (GKEGP). 2 intramembrane regions (helical) span residues 312-324 (VLSA…VSVA) and 328-336 (PIGGVLFSL). The next 5 membrane-spanning stretches (helical) occupy residues 348 to 366 (LWRS…RSIN), 389 to 414 (LVPF…IAWC), 422 to 442 (LGKY…ILAF), 498 to 518 (MWQL…TFGM), and 523 to 542 (GLFI…LGVG). The short motif at 523-527 (GLFIP) is the Selectivity filter part_3 element. F525 serves as a coordination point for chloride. The helical intramembrane region spans 570-584 (GLYAMVGAAACLGGV). Residues 585-587 (TRM) constitute an intramembrane region (note=Loop between two helices). Residues 588-599 (TVSLVVIMFELT) constitute an intramembrane region (helical). Positions 600 to 604 (GGLEY) form an intramembrane region, note=Loop between two helices. Residues 605–622 (IVPLMAAAMTSKWVADAL) form a helical membrane-spanning segment. Over 623–816 (GREGIYDAHI…NQDPDSILFN (194 aa)) the chain is Cytoplasmic. Residue Y628 coordinates chloride. CBS domains lie at 656–720 (MKPR…ARKK) and 752–812 (ILDL…DPDS). Residues T666, 687 to 689 (YSG), and 794 to 797 (TKKD) contribute to the ATP site.

Belongs to the chloride channel (TC 2.A.49) family. ClC-5/CLCN5 subfamily. In terms of assembly, interacts with NEDD4 and NEDD4L. Post-translationally, ubiquitinated by NEDD4L in the presence of albumin; which promotes endocytosis and proteasomal degradation. In terms of tissue distribution, kidney specific.

It is found in the golgi apparatus membrane. The protein localises to the endosome membrane. Its subcellular location is the cell membrane. It carries out the reaction 2 chloride(in) + H(+)(out) = 2 chloride(out) + H(+)(in). In terms of biological role, proton-coupled chloride transporter. Functions as antiport system and exchanges chloride ions against protons. Important for normal acidification of the endosome lumen. May play an important role in renal tubular function. The CLC channel family contains both chloride channels and proton-coupled anion transporters that exchange chloride or another anion for protons. The absence of conserved gating glutamate residues is typical for family members that function as channels. The sequence is that of H(+)/Cl(-) exchange transporter 5 (Clcn5) from Mus musculus (Mouse).